The chain runs to 538 residues: Nicotinate phosphoribosyltransferase (538 aa).

Positions 21 and 210 each coordinate nicotinate. His-213 carries the phosphohistidine modification. A nicotinate-binding site is contributed by Arg-318. Thr-380 contacts 5-phospho-alpha-D-ribose 1-diphosphate.

Belongs to the NAPRTase family. In terms of assembly, homodimer. Mg(2+) serves as cofactor. Requires Mn(2+) as cofactor. In terms of processing, transiently phosphorylated on a His residue during the reaction cycle. Phosphorylation strongly increases the affinity for substrates and increases the rate of nicotinate D-ribonucleotide production. Dephosphorylation regenerates the low-affinity form of the enzyme, leading to product release.

It localises to the cytoplasm. Its subcellular location is the cytosol. It catalyses the reaction nicotinate + 5-phospho-alpha-D-ribose 1-diphosphate + ATP + H2O = nicotinate beta-D-ribonucleotide + ADP + phosphate + diphosphate. It functions in the pathway cofactor biosynthesis; NAD(+) biosynthesis; nicotinate D-ribonucleotide from nicotinate: step 1/1. Its function is as follows. Catalyzes the first step in the biosynthesis of NAD from nicotinic acid, the ATP-dependent synthesis of beta-nicotinate D-ribonucleotide from nicotinate and 5-phospho-D-ribose 1-phosphate. Helps prevent cellular oxidative stress via its role in NAD biosynthesis. The chain is Nicotinate phosphoribosyltransferase (Naprt) from Rattus norvegicus (Rat).